Here is a 34-residue protein sequence, read N- to C-terminus: MSDIN-like toxin proprotein 4 (34 aa).

Positions 1-10 are excised as a propeptide; it reads MSDINATRLP. The cyclopeptide (Val-Pro) cross-link spans 11–17; sequence VWIGYSP. The propeptide occupies 18-34; the sequence is CVGDDCIALLTRGEGLC.

Belongs to the MSDIN fungal toxin family. Processed by the macrocyclase-peptidase enzyme POPB to yield a toxic cyclic heptapeptide. POPB first removes 10 residues from the N-terminus. Conformational trapping of the remaining peptide forces the enzyme to release this intermediate rather than proceed to macrocyclization. The enzyme rebinds the remaining peptide in a different conformation and catalyzes macrocyclization of the N-terminal 7 residues. As to expression, expressed in basidiocarps.

Probable toxin that belongs to the MSDIN-like toxin family responsible for a large number of food poisoning cases and deaths. In Amanita exitialis (Guangzhou destroying angel), this protein is MSDIN-like toxin proprotein 4.